We begin with the raw amino-acid sequence, 347 residues long: NADH-ubiquinone oxidoreductase chain 2 (347 aa).

Helical transmembrane passes span 5 to 22, 26 to 45, 60 to 80, 150 to 170, 178 to 198, 200 to 220, 242 to 262, 274 to 294, and 324 to 344; these read ILTI…MVLI, WLTV…PILM, FLTQ…NLLL, NPNL…WGGL, ILAY…TYNP, LMML…MLFM, SLIL…GFIP, NMII…YFYM, and TLLP…PMML.

The protein belongs to the complex I subunit 2 family. Core subunit of respiratory chain NADH dehydrogenase (Complex I) which is composed of 45 different subunits. Interacts with TMEM242.

It localises to the mitochondrion inner membrane. It catalyses the reaction a ubiquinone + NADH + 5 H(+)(in) = a ubiquinol + NAD(+) + 4 H(+)(out). Its function is as follows. Core subunit of the mitochondrial membrane respiratory chain NADH dehydrogenase (Complex I) which catalyzes electron transfer from NADH through the respiratory chain, using ubiquinone as an electron acceptor. Essential for the catalytic activity and assembly of complex I. This chain is NADH-ubiquinone oxidoreductase chain 2, found in Martes flavigula (Yellow-throated marten).